A 644-amino-acid polypeptide reads, in one-letter code: Probable lysophospholipase 2 (644 aa).

An N-terminal signal peptide occupies residues 1-19; that stretch reads MYFQSFYFLALLLATAVYG. Residues Asn-44, Asn-96, Asn-141, Asn-178, Asn-221, Asn-245, Asn-253, Asn-281, Asn-286, Asn-316, Asn-319, Asn-373, Asn-393, Asn-449, Asn-501, Asn-558, Asn-579, and Asn-596 are each glycosylated (N-linked (GlcNAc...) asparagine). Residues 53–600 form the PLA2c domain; that stretch reads SCDSSEIMVN…SQYCWNGTVD (548 aa).

Belongs to the lysophospholipase family.

The protein localises to the secreted. It catalyses the reaction a 1-acyl-sn-glycero-3-phosphocholine + H2O = sn-glycerol 3-phosphocholine + a fatty acid + H(+). In terms of biological role, catalyzes the release of fatty acids from lysophospholipids. This chain is Probable lysophospholipase 2 (plb2), found in Schizosaccharomyces pombe (strain 972 / ATCC 24843) (Fission yeast).